The chain runs to 422 residues: MDFLEIVGQVPLKGGVEISGAKNSALPILAATLLSRQEVKIKSLPQVADIKAMALLLQNLGAELEWLNPHTLQLSTKSLHHTEATYDLVRKMRASILVLGPLLARFKECLVSLPGGCAIGARPVDLHLKAMQQLGAEIKIEQGYIHAKAPKGLKGNDILFDKISVTGTENALMAASLAKGITRIINAAKEPEIAQLCAFLQSGGVEIEGVGSSELKIRGVESDALNLKDIQIIPDRIEAGTYLCVGAITNSQLKINRIIPNHIQAITDKLIEIGFSLDIQENSIEIYPAKKRQAFEITTKEYPGFPTDMQAQFMALATQCLGTSIIEETLFENRFMHASELQRLGANISLKTNVATISGSTELTGSDVMATDLRASSALVLAALVAKGVSRVHRIYHLDRGYERLEDKINALGAKVLRLKEK.

22-23 contributes to the phosphoenolpyruvate binding site; sequence KN. Arginine 93 is a binding site for UDP-N-acetyl-alpha-D-glucosamine. Residue cysteine 117 is the Proton donor of the active site. A 2-(S-cysteinyl)pyruvic acid O-phosphothioketal modification is found at cysteine 117. Residues 122-126, aspartate 308, and leucine 330 each bind UDP-N-acetyl-alpha-D-glucosamine; that span reads RPVDL.

Belongs to the EPSP synthase family. MurA subfamily.

The protein resides in the cytoplasm. It catalyses the reaction phosphoenolpyruvate + UDP-N-acetyl-alpha-D-glucosamine = UDP-N-acetyl-3-O-(1-carboxyvinyl)-alpha-D-glucosamine + phosphate. It participates in cell wall biogenesis; peptidoglycan biosynthesis. Its function is as follows. Cell wall formation. Adds enolpyruvyl to UDP-N-acetylglucosamine. This is UDP-N-acetylglucosamine 1-carboxyvinyltransferase from Helicobacter pylori (strain HPAG1).